The primary structure comprises 776 residues: Cilium assembly protein DZIP1L (776 aa).

The segment at 166–189 (HTCHLCDKTFMNATFLRGHIQRRH) adopts a C2H2-type zinc-finger fold. Residues 196 to 450 (GKQKQEQQLG…RKVLAALRNN (255 aa)) are a coiled coil. Serine 425 and serine 426 each carry phosphoserine. Residues 520 to 776 (SRAKKRWEGT…SGSRPRIPGW (257 aa)) form a disordered region. Over residues 600 to 618 (GPSSTPVSPGPGLSTPPFS) the composition is skewed to low complexity. Positions 652 to 683 (WSDSETSEESAQSPGKGSDGLASSATLVQSMV) are enriched in polar residues. Residues 685-694 (NLEKQLETPA) are compositionally biased toward basic and acidic residues. Polar residues predominate over residues 709-721 (TALQRSSTPARKT).

Belongs to the DZIP C2H2-type zinc-finger protein family. In terms of assembly, interacts with SEPTIN2.

The protein resides in the cytoplasm. It is found in the cytoskeleton. It localises to the cilium basal body. The protein localises to the microtubule organizing center. Its subcellular location is the centrosome. The protein resides in the centriole. Involved in primary cilium formation. Probably acts as a transition zone protein required for localization of PKD1/PC1 and PKD2/PC2 to the ciliary membrane. In Rattus norvegicus (Rat), this protein is Cilium assembly protein DZIP1L.